A 252-amino-acid chain; its full sequence is Imidazole glycerol phosphate synthase subunit HisF (252 aa).

Catalysis depends on residues D11 and D130.

Belongs to the HisA/HisF family. In terms of assembly, heterodimer of HisH and HisF.

It is found in the cytoplasm. The catalysed reaction is 5-[(5-phospho-1-deoxy-D-ribulos-1-ylimino)methylamino]-1-(5-phospho-beta-D-ribosyl)imidazole-4-carboxamide + L-glutamine = D-erythro-1-(imidazol-4-yl)glycerol 3-phosphate + 5-amino-1-(5-phospho-beta-D-ribosyl)imidazole-4-carboxamide + L-glutamate + H(+). It participates in amino-acid biosynthesis; L-histidine biosynthesis; L-histidine from 5-phospho-alpha-D-ribose 1-diphosphate: step 5/9. IGPS catalyzes the conversion of PRFAR and glutamine to IGP, AICAR and glutamate. The HisF subunit catalyzes the cyclization activity that produces IGP and AICAR from PRFAR using the ammonia provided by the HisH subunit. The sequence is that of Imidazole glycerol phosphate synthase subunit HisF from Streptococcus gordonii (strain Challis / ATCC 35105 / BCRC 15272 / CH1 / DL1 / V288).